Reading from the N-terminus, the 135-residue chain is Putative pre-16S rRNA nuclease (135 aa).

This sequence belongs to the YqgF nuclease family.

The protein localises to the cytoplasm. Functionally, could be a nuclease involved in processing of the 5'-end of pre-16S rRNA. The sequence is that of Putative pre-16S rRNA nuclease from Thermus thermophilus (strain ATCC 27634 / DSM 579 / HB8).